The following is a 409-amino-acid chain: Sprouty-related, EVH1 domain-containing protein 2 (409 aa).

In terms of domain architecture, WH1 spans 5–121 (APPEDDSYIV…RGVRKAIEDL (117 aa)). The disordered stretch occupies residues 121 to 170 (LTEGSTTSSSTIHNEAELGDDDVFATSTDSSSNSSQKREPPVRTIASPLP). Positions 123–133 (EGSTTSSSTIH) are enriched in polar residues. Positions 146–155 (TSTDSSSNSS) are enriched in low complexity. In terms of domain architecture, KBD spans 199-253 (PHRHVSFPDDDDEIVRINPRERNWLTGYEDYRQAPIHRKYPDTESIDSYVRFAKS). The 109-residue stretch at 299–407 (RCIYCRDMFN…CGCCGGKHKA (109 aa)) folds into the SPR domain.

The protein resides in the cell membrane. The protein localises to the cytoplasmic vesicle. Its subcellular location is the secretory vesicle membrane. It is found in the cytoplasm. Negatively regulates Ras signaling pathways and downstream activation of MAP kinases. In Xenopus tropicalis (Western clawed frog), this protein is Sprouty-related, EVH1 domain-containing protein 2 (spred2).